Consider the following 296-residue polypeptide: MPTPYLSGSAVALVTPFKSDSSIDFEAIARLTEFHVAAGTNIIIPCGTTGESPTLAEEEQVAIIKTVVEAAQGKLMVAAGAGTNNTHHAVELAKNAEKAGAAAILSVAPYYNKPSQEGFYQHYRHIAEAVAVPIIIYNVPGRTGCNVAASTILRLARDFDNVLAVKEASENFTQISELLEERPSNFAVLTGEDSLILPFMAMGGNGVISVAANEIPAQIRQLVESAGSGDLVTARTLYSRYRKLLKLNFIESNPVPVKYALARMGMIEENYRLPLVPLSAESKRAMDEELTLLGLV.

Thr-49 provides a ligand contact to pyruvate. The active-site Proton donor/acceptor is the Tyr-137. Lys-166 acts as the Schiff-base intermediate with substrate in catalysis. Ile-208 contacts pyruvate.

It belongs to the DapA family. In terms of assembly, homotetramer; dimer of dimers.

Its subcellular location is the cytoplasm. It carries out the reaction L-aspartate 4-semialdehyde + pyruvate = (2S,4S)-4-hydroxy-2,3,4,5-tetrahydrodipicolinate + H2O + H(+). The protein operates within amino-acid biosynthesis; L-lysine biosynthesis via DAP pathway; (S)-tetrahydrodipicolinate from L-aspartate: step 3/4. In terms of biological role, catalyzes the condensation of (S)-aspartate-beta-semialdehyde [(S)-ASA] and pyruvate to 4-hydroxy-tetrahydrodipicolinate (HTPA). This is 4-hydroxy-tetrahydrodipicolinate synthase from Chlorobium chlorochromatii (strain CaD3).